Reading from the N-terminus, the 265-residue chain is tRNA (guanine-N(1)-)-methyltransferase (265 aa).

S-adenosyl-L-methionine contacts are provided by residues G119 and 139 to 144; that span reads VGDYIL.

This sequence belongs to the RNA methyltransferase TrmD family. Homodimer.

Its subcellular location is the cytoplasm. The enzyme catalyses guanosine(37) in tRNA + S-adenosyl-L-methionine = N(1)-methylguanosine(37) in tRNA + S-adenosyl-L-homocysteine + H(+). In terms of biological role, specifically methylates guanosine-37 in various tRNAs. The polypeptide is tRNA (guanine-N(1)-)-methyltransferase (Pseudoalteromonas atlantica (strain T6c / ATCC BAA-1087)).